A 208-amino-acid chain; its full sequence is V-type ATP synthase subunit D (208 aa).

The protein belongs to the V-ATPase D subunit family.

Functionally, produces ATP from ADP in the presence of a proton gradient across the membrane. This is V-type ATP synthase subunit D from Streptococcus pyogenes serotype M6 (strain ATCC BAA-946 / MGAS10394).